The chain runs to 1341 residues: WD repeat-containing protein 19 (1341 aa).

6 WD repeats span residues Ser11 to Ile51, Ser52 to Leu92, Gly95 to Val134, Lys137 to Thr175, Asp273 to Ala311, and Asp317 to Ala356. TPR repeat units follow at residues Ala736 to Leu769, Pro775 to Glu808, Arg840 to Ala873, Pro895 to Ile928, Leu951 to Phe984, and Glu1020 to Val1053.

In terms of assembly, component of the IFT complex A (IFT-A) complex. IFT-A complex is divided into a core subcomplex composed of IFT122:IFT140:WDR19 which is associated with TULP3 and a peripheral subcomplex composed of IFT43:WDR35:TTC21B. Interacts (via C-terminal region) with IFT122 (via C-terminal region). Interacts with BBS1. Interacts with TTC25. As to expression, tissue-specific expression of isoforms. Expressed in the prostate, testis, epididymis, submaxillary and salivary glands. Expressed in ependymal cells lining brain ventricles (at protein level).

Its subcellular location is the cell projection. The protein localises to the cilium. It is found in the cytoplasm. The protein resides in the cytoskeleton. It localises to the cilium basal body. Its subcellular location is the photoreceptor outer segment. The protein localises to the flagellum. As component of the IFT complex A (IFT-A), a complex required for retrograde ciliary transport and entry into cilia of G protein-coupled receptors (GPCRs), it is involved in cilia function and/or assembly. Essential for functional IFT-A assembly and ciliary entry of GPCRs. Associates with the BBSome complex to mediate ciliary transport. This chain is WD repeat-containing protein 19, found in Mus musculus (Mouse).